Consider the following 56-residue polypeptide: Photosystem II reaction center protein K (56 aa).

Residues 1–19 constitute a propeptide that is removed on maturation; the sequence is MFNIFLDDAFIHSNNPFFG. Residues 35–55 traverse the membrane as a helical segment; sequence MPIIPVLSFLLAFVWQAAVSF.

The protein belongs to the PsbK family. In terms of assembly, PSII is composed of 1 copy each of membrane proteins PsbA, PsbB, PsbC, PsbD, PsbE, PsbF, PsbH, PsbI, PsbJ, PsbK, PsbL, PsbM, PsbT, PsbX, PsbY, PsbZ, Psb30/Ycf12, at least 3 peripheral proteins of the oxygen-evolving complex and a large number of cofactors. It forms dimeric complexes.

The protein localises to the plastid. Its subcellular location is the chloroplast thylakoid membrane. Its function is as follows. One of the components of the core complex of photosystem II (PSII). PSII is a light-driven water:plastoquinone oxidoreductase that uses light energy to abstract electrons from H(2)O, generating O(2) and a proton gradient subsequently used for ATP formation. It consists of a core antenna complex that captures photons, and an electron transfer chain that converts photonic excitation into a charge separation. The chain is Photosystem II reaction center protein K from Pinus thunbergii (Japanese black pine).